The following is a 372-amino-acid chain: Cytochrome b (372 aa).

4 consecutive transmembrane segments (helical) span residues 25-45 (FGSMLLTCSALQTITGFFLAI), 69-90 (WIMQNLHAIGASMFFICIYIHI), 105-125 (WLSGTILLFILMATAFFGYVL), and 170-190 (FFALHFILPFTIISLSSIHIM). Heme b-binding residues include histidine 75 and histidine 89. Heme b-binding residues include histidine 174 and histidine 188. Residue histidine 193 coordinates a ubiquinone. Helical transmembrane passes span 218–238 (HKDILVLTIMLTTMFIIMTLT), 280–300 (LGGTVALVLSVAILLTTPFTH), 312–332 (LTQLMFWTLVATFITITWAAT), and 339–358 (FTMIGQMTSLLYFSFFIMNP).

Belongs to the cytochrome b family. The cytochrome bc1 complex contains 3 respiratory subunits (MT-CYB, CYC1 and UQCRFS1), 2 core proteins (UQCRC1 and UQCRC2) and probably 6 low-molecular weight proteins. It depends on heme b as a cofactor.

The protein localises to the mitochondrion inner membrane. Component of the ubiquinol-cytochrome c reductase complex (complex III or cytochrome b-c1 complex) that is part of the mitochondrial respiratory chain. The b-c1 complex mediates electron transfer from ubiquinol to cytochrome c. Contributes to the generation of a proton gradient across the mitochondrial membrane that is then used for ATP synthesis. This chain is Cytochrome b (MT-CYB), found in Lycodon semicarinatus (Ryukyu odd-tooth snake).